We begin with the raw amino-acid sequence, 329 residues long: Prostaglandin reductase 1 (329 aa).

The residue at position 18 (T18) is a Phosphothreonine. Position 20 is a phosphoserine (S20). Residues 152 to 155, K178, Y193, N217, 239 to 245, 270 to 272, and N321 contribute to the NADP(+) site; these read GAVG, CGAISVY, and FVV. K178 is modified (N6-(2-hydroxyisobutyryl)lysine; alternate). K178 is modified (N6-acetyllysine; alternate).

This sequence belongs to the NADP-dependent oxidoreductase L4BD family. In terms of assembly, monomer or homodimer.

It localises to the cytoplasm. It carries out the reaction 13,14-dihydro-15-oxo-prostaglandin E1 + NADP(+) = 15-oxoprostaglandin E1 + NADPH + H(+). The catalysed reaction is 13,14-dihydro-15-oxo-prostaglandin E2 + NADP(+) = 15-oxoprostaglandin E2 + NADPH + H(+). The enzyme catalyses 13,14-dihydro-15-oxo-prostaglandin F1alpha + NADP(+) = 15-oxoprostaglandin F1alpha + NADPH + H(+). It catalyses the reaction 13,14-dihydro-15-oxo-PGF2alpha + NADP(+) = 15-oxoprostaglandin F2alpha + NADPH + H(+). It carries out the reaction leukotriene B4 + NADP(+) = 12-oxo-leukotriene B4 + NADPH + H(+). The catalysed reaction is 20-hydroxy-leukotriene B4 + NADP(+) = 12-oxo-20-hydroxy-leukotriene B4 + NADPH + H(+). The enzyme catalyses 6-trans-leukotriene B4 + NADP(+) = 12-oxo-(5S)-hydroxy-(6E,8E,10E,14Z)-eicosatetraenoate + NADPH + H(+). It catalyses the reaction (5S,12S)-dihydroxy-(6E,10E,12E,14Z)-eicosatetraenoate + NADP(+) = 12-oxo-(5S)-hydroxy-(6E,8E,10E,14Z)-eicosatetraenoate + NADPH + H(+). It carries out the reaction an n-alkanal + NADP(+) = an alk-2-enal + NADPH + H(+). The catalysed reaction is hexanal + NADP(+) = (E)-hex-2-enal + NADPH + H(+). The enzyme catalyses octanal + NADP(+) = (2E)-octenal + NADPH + H(+). It catalyses the reaction decanal + NADP(+) = (2E)-decenal + NADPH + H(+). It carries out the reaction dodecanal + NADP(+) = (2E)-dodecenal + NADPH + H(+). The catalysed reaction is 4-hydroxynonanal + NADP(+) = (E)-4-hydroxynon-2-enal + NADPH + H(+). The enzyme catalyses pentan-2-one + NADP(+) = (E)-pent-3-en-2-one + NADPH + H(+). It catalyses the reaction nonan-2-one + NADP(+) = (3E)-nonen-2-one + NADPH + H(+). Functionally, NAD(P)H-dependent oxidoreductase involved in metabolic inactivation of pro- and anti-inflammatory eicosanoids: prostaglandins (PG), leukotrienes (LT) and lipoxins (LX). Catalyzes with high efficiency the reduction of the 13,14 double bond of 15-oxoPGs, including 15-oxo-PGE1, 15-oxo-PGE2, 15-oxo-PGF1-alpha and 15-oxo-PGF2-alpha. Catalyzes with lower efficiency the oxidation of the hydroxyl group at C12 of LTB4 and its derivatives, converting them into biologically less active 12-oxo-LTB4 metabolites. Reduces 15-oxo-LXA4 to 13,14 dihydro-15-oxo-LXA4, enhancing neutrophil recruitment at the inflammatory site. Plays a role in metabolic detoxification of alkenals and ketones. Reduces alpha,beta-unsaturated alkenals and ketones, particularly those with medium-chain length, showing highest affinity toward (2E)-decenal and (3E)-3-nonen-2-one. May inactivate 4-hydroxy-2-nonenal, a cytotoxic lipid constituent of oxidized low-density lipoprotein particles. The protein is Prostaglandin reductase 1 (PTGR1) of Bos taurus (Bovine).